Consider the following 486-residue polypeptide: Galactose-3-O-sulfotransferase 4 (486 aa).

Over 1-18 the chain is Cytoplasmic; it reads MGPLSPARTLRLWGPRSL. A helical; Signal-anchor for type II membrane protein transmembrane segment spans residues 19–39; it reads GVALGVFMTIGFALQLLGGPF. Residues 40–486 are Lumenal-facing; sequence QRRLPGLQLR…PLKTSRPLSP (447 aa). A glycan (N-linked (GlcNAc...) asparagine) is linked at Asn374.

This sequence belongs to the galactose-3-O-sulfotransferase family. The cofactor is Mn(2+). As to expression, expressed mainly in placenta, thymus, testis, ovary, spinal cord, trachea and adrenal gland and at low levels in brain, lung, spleen, prostate, small intestine, colon, stomach thyroid and lymph node.

The protein localises to the golgi apparatus. The protein resides in the golgi stack membrane. Its pathway is protein modification; carbohydrate sulfation. Functionally, catalyzes the transfer of sulfate to beta-1,3-linked galactose residues in O-linked glycoproteins. Good substrates include asialofetuin, Gal-beta-1,3-GalNAc and Gal-beta-1,3 (GlcNAc-beta-1,6)GalNAc. The sequence is that of Galactose-3-O-sulfotransferase 4 (GAL3ST4) from Homo sapiens (Human).